Here is a 150-residue protein sequence, read N- to C-terminus: Large ribosomal subunit protein bL9 (150 aa).

Belongs to the bacterial ribosomal protein bL9 family.

In terms of biological role, binds to the 23S rRNA. This chain is Large ribosomal subunit protein bL9, found in Staphylococcus aureus (strain NCTC 8325 / PS 47).